The following is a 179-amino-acid chain: Inner membrane-spanning protein YciB (179 aa).

5 consecutive transmembrane segments (helical) span residues 22-42 (IYAATAALIVATAIVLIYSWV), 50-70 (MALITFVLVVVFGGLTLFFHN), 76-96 (WKVTVIYALFAGALLVSQWVM), 121-141 (LAWAVFFILCGLANIYIAFWL), and 149-169 (FKVFGLTALTLIFTLLSGIYI).

The protein belongs to the YciB family.

Its subcellular location is the cell inner membrane. Plays a role in cell envelope biogenesis, maintenance of cell envelope integrity and membrane homeostasis. In Shigella boydii serotype 18 (strain CDC 3083-94 / BS512), this protein is Inner membrane-spanning protein YciB.